A 493-amino-acid chain; its full sequence is Cytochrome P450 monooxygenase esdpG (493 aa).

A helical transmembrane segment spans residues 10–30; that stretch reads VLGVTWLSALFTLGSLSVFWL. Cys-434 contacts heme.

It belongs to the cytochrome P450 family. The cofactor is heme.

Its subcellular location is the membrane. It functions in the pathway secondary metabolite biosynthesis; terpenoid biosynthesis. In terms of biological role, cytochrome P450 monooxygenasee; part of the cluster that mediates the biosynthesis of shearones, diterpenoid pyrones (DPs) which are structurally diverse meroterpenoids consisting of a diterpene linked by a pyrone, and which may exhibit a range of bioactivities. Whitin the pathway, esdpG takes part in the molecular scaffold modification via the hydroxylation at C-11 and C-12 and can transform shearone A into shearone C and shearone B into shearone D. The molecular scaffold is commonly biosynthesized by a series of enzymes including the non-reducing polyketide synthase (NR-PKS) esdpA that generates an alpha-pyrone; the prenyltransferase esdpC that attaches a geranylgeranyl pyrophosphate (GGPP) produced by the GGPP synthase (GGPPS) esdpD onto the pyrone unit; the FAD-dependent monooxygenase esdpE that converts an olefin on the diterpene unit into an epoxide; and the terpene cyclase esdpB that catalyzes the cyclization reactions to give the molecular backbone shearone A. In the modification steps, esdpF oxidizes the hydroxy group to a ketone at C-3 and esdpG then attaches hydroxy groups at both C-11 and C-12. After that, esdpI hydroxylates at C-20 and esdpH hydroxylates at C-6'. The ether bridge is generated by nucleophilic attack of the hydroxy group at C-20 to the carbonyl carbon at C-3. EsdpH can also functions prior to esdpI. The different combinations of these modification enzymes lead to the production of diverse shearone derivatives, shearone I being the end product of the pathway. The alpha-ketoglutarate-dependent dioxygenase esdpJ seems not to be involved in this pathway. This is Cytochrome P450 monooxygenase esdpG from Penicillium shearii (Eupenicillium shearii).